A 61-amino-acid polypeptide reads, in one-letter code: Putative protein RenD (61 aa).

This Escherichia coli (strain K12) protein is Putative protein RenD (renD).